The sequence spans 78 residues: Acyl carrier protein (78 aa).

Residues 2–77 (SNIEQQVKKI…LAIDYINAHN (76 aa)) enclose the Carrier domain. The residue at position 37 (serine 37) is an O-(pantetheine 4'-phosphoryl)serine.

Belongs to the acyl carrier protein (ACP) family. 4'-phosphopantetheine is transferred from CoA to a specific serine of apo-ACP by AcpS. This modification is essential for activity because fatty acids are bound in thioester linkage to the sulfhydryl of the prosthetic group.

The protein resides in the cytoplasm. It functions in the pathway lipid metabolism; fatty acid biosynthesis. Its function is as follows. Carrier of the growing fatty acid chain in fatty acid biosynthesis. This Neisseria meningitidis serogroup C / serotype 2a (strain ATCC 700532 / DSM 15464 / FAM18) protein is Acyl carrier protein.